Here is a 200-residue protein sequence, read N- to C-terminus: Insulin, isoform 2 (200 aa).

A disordered region spans residues 148-200; it reads EVDSSPQPQGSESLPAQPPAQPAPQPEPQQAREPSPEVSCCGLWPRRPQRSQN. Positions 163 to 174 are enriched in pro residues; that stretch reads AQPPAQPAPQPE. The segment covering 175–184 has biased composition (low complexity); sequence PQQAREPSPE.

As to expression, expressed in pancreas, eye and, to a lower extent, in limb.

This chain is Insulin, isoform 2 (INS-IGF2), found in Homo sapiens (Human).